The chain runs to 764 residues: uncharacterized protein (764 aa).

Residues 1–646 (MKEENGFAGF…LTKLYTFPFT (646 aa)) lie on the Lumenal side of the membrane. Residues 22–173 (LNDTAPTKSQ…SAITAPSRKV (152 aa)) are disordered. Asn23 carries an N-linked (GlcNAc...) asparagine glycan. 2 stretches are compositionally biased toward polar residues: residues 25 to 41 (TAPT…NNEG) and 61 to 82 (SEAS…QSPS). At Ser80 the chain carries Phosphoserine. A compositionally biased stretch (acidic residues) spans 98 to 113 (ENQENEADEAENEETS). A glycan (N-linked (GlcNAc...) asparagine) is linked at Asn118. Over residues 118-145 (NHTENTEEIAEESRPLERTHSGSNHHEA) the composition is skewed to basic and acidic residues. Residues 158–173 (NTLSQGSAITAPSRKV) are compositionally biased toward polar residues. The region spanning 197-264 (RDFHRIFKVL…TEIVSVEKKS (68 aa)) is the GRAM domain. Residues Asn240 and Asn330 are each glycosylated (N-linked (GlcNAc...) asparagine). The disordered stretch occupies residues 320–406 (ASGNHHSGSS…DGNSVKKMNE (87 aa)). Positions 321-330 (SGNHHSGSSN) are enriched in low complexity. Residues 331 to 340 (QSINADSSAG) show a composition bias toward polar residues. Residues 352–371 (ANDESSEDDDEDNNTDEANE) are compositionally biased toward acidic residues. 2 N-linked (GlcNAc...) asparagine glycosylation sites follow: Asn364 and Asn376. Over residues 389–399 (HSDNVVLSDGN) the composition is skewed to polar residues. A VASt domain is found at 432-598 (LAHVLCSDVV…AFENYKVSPK (167 aa)). N-linked (GlcNAc...) asparagine glycosylation is found at Asn442 and Asn554. The segment covering 598-613 (KGRRKKITKHTKKKNK) has biased composition (basic residues). The tract at residues 598-626 (KGRRKKITKHTKKKNKHASETSVAPEKVD) is disordered. N-linked (GlcNAc...) asparagine glycosylation occurs at Asn627. A helical membrane pass occupies residues 647-667 (IITWLMHPTHLLLVVMFSMLV). The Cytoplasmic segment spans residues 668 to 764 (LQWWYMQQIL…LRKLEASGYI (97 aa)).

This sequence belongs to the YSP2 family.

The protein localises to the membrane. This is an uncharacterized protein from Schizosaccharomyces pombe (strain 972 / ATCC 24843) (Fission yeast).